The primary structure comprises 429 residues: Enolase (429 aa).

Gln162 contributes to the (2R)-2-phosphoglycerate binding site. Glu204 functions as the Proton donor in the catalytic mechanism. 3 residues coordinate Mg(2+): Asp241, Glu283, and Asp310. 4 residues coordinate (2R)-2-phosphoglycerate: Lys335, Arg364, Ser365, and Lys386. The active-site Proton acceptor is the Lys335.

This sequence belongs to the enolase family. The cofactor is Mg(2+).

Its subcellular location is the cytoplasm. It is found in the secreted. It localises to the cell surface. It carries out the reaction (2R)-2-phosphoglycerate = phosphoenolpyruvate + H2O. It participates in carbohydrate degradation; glycolysis; pyruvate from D-glyceraldehyde 3-phosphate: step 4/5. Its function is as follows. Catalyzes the reversible conversion of 2-phosphoglycerate (2-PG) into phosphoenolpyruvate (PEP). It is essential for the degradation of carbohydrates via glycolysis. This chain is Enolase, found in Mycobacterium leprae (strain TN).